The sequence spans 490 residues: Betaine aldehyde dehydrogenase (490 aa).

2 residues coordinate K(+): isoleucine 27 and aspartate 93. 150 to 152 (GAW) is a binding site for NAD(+). The Charge relay system role is filled by lysine 162. Residue 176-179 (KPSE) participates in NAD(+) binding. Valine 180 provides a ligand contact to K(+). Position 230 to 233 (230 to 233 (GTTT)) interacts with NAD(+). Residue leucine 246 coordinates K(+). Glutamate 252 (proton acceptor) is an active-site residue. 3 residues coordinate NAD(+): glycine 254, cysteine 286, and glutamate 387. Cysteine 286 functions as the Nucleophile in the catalytic mechanism. Cysteine 286 is subject to Cysteine sulfenic acid (-SOH). Positions 457 and 460 each coordinate K(+). Catalysis depends on glutamate 464, which acts as the Charge relay system.

Belongs to the aldehyde dehydrogenase family. In terms of assembly, dimer of dimers. The cofactor is K(+).

It catalyses the reaction betaine aldehyde + NAD(+) + H2O = glycine betaine + NADH + 2 H(+). Its pathway is amine and polyamine biosynthesis; betaine biosynthesis via choline pathway; betaine from betaine aldehyde: step 1/1. Its function is as follows. Involved in the biosynthesis of the osmoprotectant glycine betaine. Catalyzes the irreversible oxidation of betaine aldehyde to the corresponding acid. The chain is Betaine aldehyde dehydrogenase from Pseudomonas putida (strain ATCC 700007 / DSM 6899 / JCM 31910 / BCRC 17059 / LMG 24140 / F1).